The sequence spans 792 residues: Putative cellulose synthase-like protein H3 (792 aa).

The next 2 membrane-spanning stretches (helical) occupy residues 25 to 45 (AWML…VRRA) and 55 to 75 (VGGA…FVWL). Residues 132–154 (GRHVRDDGGPGARAAGGDGEQGA) are disordered. Over residues 140–151 (GPGARAAGGDGE) the composition is skewed to gly residues. Catalysis depends on residues aspartate 181 and aspartate 501. The next 6 helical transmembrane spans lie at 579–599 (VWAV…YCLL), 613–632 (FNIT…VEYM), 650–670 (IISA…TIGL), 706–726 (VFIP…IGTW), 739–759 (GPGI…LPFV), and 768–788 (YGIP…FLFC).

It belongs to the glycosyltransferase 2 family. Plant cellulose synthase-like H subfamily.

The protein localises to the golgi apparatus membrane. Thought to be a Golgi-localized beta-glycan synthase that polymerize the backbones of noncellulosic polysaccharides (hemicelluloses) of plant cell wall. The protein is Putative cellulose synthase-like protein H3 (CSLH3) of Oryza sativa subsp. japonica (Rice).